Reading from the N-terminus, the 639-residue chain is MASPATQTANAIAAINNRSNLVIPEIDFTQHQLENGEIVSTTERVIKDVQAPAMYVPTDDQFWSKVDKTKPDIAFLKNHFYREGRLTEEQALYILEKGGELLRSEPNLLEVDAPITVCGDIHGQYYDLMKLFEVGGNPADTRYLFLGDYVDRGYFSIECVLYLWSLKMWYPDTLFLLRGNHECRHLTDYFTFKLECKHKYSETVYNACMESFCNLPLAAVMNKQFLCIHGGLSPELHTLDDLRSINRFREPPTQGLMCDILWADPLEDFGSEKTNENFLHNHVRGCSYFFTYNAACQFLERNNLLSIIRAHEAQDAGYRMYRKTKTTGFPSVMTIFSAPNYLDVYSNKAAVLKYESNVMNIRQFNCTPHPYWLPNFMDVFTWSLPFVGEKITDMLIAILNCCTKEELEEEDEEFPLNAPEPTDAESAAERRQIIKNKILAVGRMSRVFSLLREESERVSELKSISGSNALPAGMLASGAEGIKEAIQGFEDARKSDIENERLPPDIIDPDEDKPASPSASPIMPATPEEIPSEIPYDSPITGTPRTPISSAIASGSPGSPGTPTSPSIGGPPLTAWRPGHGRRTSLGTTKTSPSTRRRSLENTMHLIRDVVGGKDAQGDGQLERLAEVISSPTKGGQGE.

Fe cation is bound by residues aspartate 120, histidine 122, and aspartate 148. Zn(2+) contacts are provided by aspartate 148 and asparagine 180. The Proton donor role is filled by histidine 181. Residues histidine 229 and histidine 311 each coordinate Zn(2+). Residues 494-503 (KSDIENERLP) are compositionally biased toward basic and acidic residues. The segment at 494–602 (KSDIENERLP…PSTRRRSLEN (109 aa)) is disordered. Composition is skewed to low complexity over residues 515-527 (ASPSASPIMPATP) and 546-572 (TPISSAIASGSPGSPGTPTSPSIGGPP).

The protein belongs to the PPP phosphatase family. PP-2B subfamily. In terms of assembly, composed of two components (A and B), the A component is the catalytic subunit and the B component confers calcium sensitivity. Requires Fe(3+) as cofactor. It depends on Zn(2+) as a cofactor.

It catalyses the reaction O-phospho-L-seryl-[protein] + H2O = L-seryl-[protein] + phosphate. The catalysed reaction is O-phospho-L-threonyl-[protein] + H2O = L-threonyl-[protein] + phosphate. Calcium-dependent, calmodulin-stimulated protein phosphatase. This subunit may have a role in the calmodulin activation of calcineurin. In Cryptococcus neoformans var. grubii serotype A (strain H99 / ATCC 208821 / CBS 10515 / FGSC 9487) (Filobasidiella neoformans var. grubii), this protein is Serine/threonine-protein phosphatase 2B catalytic subunit A1 (CNA1).